A 152-amino-acid polypeptide reads, in one-letter code: Interleukin-2 (152 aa).

The first 20 residues, 1 to 20, serve as a signal peptide directing secretion; it reads MYRMQLLSCIALTLALVANG. Residue Thr-23 is glycosylated (O-linked (GalNAc...) threonine). A disulfide bridge connects residues Cys-78 and Cys-126.

This sequence belongs to the IL-2 family.

Its subcellular location is the secreted. Its function is as follows. Cytokine produced by activated CD4-positive helper T-cells and to a lesser extend activated CD8-positive T-cells and natural killer (NK) cells that plays pivotal roles in the immune response and tolerance. Binds to a receptor complex composed of either the high-affinity trimeric IL-2R (IL2RA/CD25, IL2RB/CD122 and IL2RG/CD132) or the low-affinity dimeric IL-2R (IL2RB and IL2RG). Interaction with the receptor leads to oligomerization and conformation changes in the IL-2R subunits resulting in downstream signaling starting with phosphorylation of JAK1 and JAK3. In turn, JAK1 and JAK3 phosphorylate the receptor to form a docking site leading to the phosphorylation of several substrates including STAT5. This process leads to activation of several pathways including STAT, phosphoinositide-3-kinase/PI3K and mitogen-activated protein kinase/MAPK pathways. Functions as a T-cell growth factor and can increase NK-cell cytolytic activity as well. Promotes strong proliferation of activated B-cells and subsequently immunoglobulin production. Plays a pivotal role in regulating the adaptive immune system by controlling the survival and proliferation of regulatory T-cells, which are required for the maintenance of immune tolerance. Moreover, participates in the differentiation and homeostasis of effector T-cell subsets, including Th1, Th2, Th17 as well as memory CD8-positive T-cells. This chain is Interleukin-2 (IL2), found in Orcinus orca (Killer whale).